The chain runs to 492 residues: Regulatory protein ViaA (492 aa).

Belongs to the ViaA family. As to quaternary structure, homodimer. Interacts with RavA.

The protein resides in the cytoplasm. In terms of biological role, component of the RavA-ViaA chaperone complex, which may act on the membrane to optimize the function of some of the respiratory chains. ViaA stimulates the ATPase activity of RavA. This Pectobacterium atrosepticum (strain SCRI 1043 / ATCC BAA-672) (Erwinia carotovora subsp. atroseptica) protein is Regulatory protein ViaA.